Reading from the N-terminus, the 338-residue chain is Putative acyl-[acyl-carrier-protein] desaturase DesA1 (338 aa).

Residues Glu-76, Glu-107, His-110, Glu-167, Glu-197, and His-200 each coordinate Fe cation. The span at 314–328 (EARTGKKVSAHELHK) shows a compositional bias: basic and acidic residues. Residues 314–338 (EARTGKKVSAHELHKTAGKLAMSRR) form a disordered region.

Belongs to the fatty acid desaturase type 2 family. As to quaternary structure, homodimer. Requires Fe(2+) as cofactor.

The protein localises to the cell surface. It functions in the pathway lipid metabolism; fatty acid metabolism. In terms of biological role, may be a desaturase involved in mycobacterial fatty acid biosynthesis. This is Putative acyl-[acyl-carrier-protein] desaturase DesA1 (desA1) from Mycobacterium tuberculosis (strain CDC 1551 / Oshkosh).